The primary structure comprises 346 residues: Histidinol-phosphate aminotransferase (346 aa).

Lys209 is subject to N6-(pyridoxal phosphate)lysine.

It belongs to the class-II pyridoxal-phosphate-dependent aminotransferase family. Histidinol-phosphate aminotransferase subfamily. In terms of assembly, homodimer. Pyridoxal 5'-phosphate is required as a cofactor.

It catalyses the reaction L-histidinol phosphate + 2-oxoglutarate = 3-(imidazol-4-yl)-2-oxopropyl phosphate + L-glutamate. The protein operates within amino-acid biosynthesis; L-histidine biosynthesis; L-histidine from 5-phospho-alpha-D-ribose 1-diphosphate: step 7/9. This Aliivibrio fischeri (strain ATCC 700601 / ES114) (Vibrio fischeri) protein is Histidinol-phosphate aminotransferase.